The primary structure comprises 465 residues: Pleckstrin homology domain-containing family S member 1 (465 aa).

The PH domain maps to E14 to Q129. The span at P159 to N173 shows a compositional bias: polar residues. Disordered stretches follow at residues P159–H179 and E258–H283. The span at E258–P271 shows a compositional bias: basic and acidic residues.

The sequence is that of Pleckstrin homology domain-containing family S member 1 from Homo sapiens (Human).